Consider the following 438-residue polypeptide: Na(+)/H(+) antiporter NhaA (438 aa).

11 helical membrane passes run 23–43 (FGGI…NSFL), 62–82 (FFIG…LFFL), 104–124 (SFPV…YFFL), 133–153 (GFGI…MLLG), 162–182 (VFLI…IALF), 185–205 (TNLK…LAVL), 212–232 (SLIP…QSGI), 302–322 (FLAP…NAGV), 337–357 (LGVI…ITFI), 372–392 (WWHI…SMFI), and 410–430 (IAIL…LFVL).

This sequence belongs to the NhaA Na(+)/H(+) (TC 2.A.33) antiporter family.

It localises to the cell inner membrane. It carries out the reaction Na(+)(in) + 2 H(+)(out) = Na(+)(out) + 2 H(+)(in). Na(+)/H(+) antiporter that extrudes sodium in exchange for external protons. This Helicobacter pylori (strain G27) protein is Na(+)/H(+) antiporter NhaA.